Consider the following 290-residue polypeptide: tRNA dimethylallyltransferase (290 aa).

Residue 9–16 (GPTASGKT) coordinates ATP. 11 to 16 (TASGKT) contributes to the substrate binding site. The interaction with substrate tRNA stretch occupies residues 34–37 (DSTQ).

This sequence belongs to the IPP transferase family. In terms of assembly, monomer. Mg(2+) serves as cofactor.

The catalysed reaction is adenosine(37) in tRNA + dimethylallyl diphosphate = N(6)-dimethylallyladenosine(37) in tRNA + diphosphate. Catalyzes the transfer of a dimethylallyl group onto the adenine at position 37 in tRNAs that read codons beginning with uridine, leading to the formation of N6-(dimethylallyl)adenosine (i(6)A). The chain is tRNA dimethylallyltransferase from Phytoplasma australiense.